Here is a 3491-residue protein sequence, read N- to C-terminus: Genome polyprotein (3491 aa).

Positions 183–277 (KYNTALVQVY…RISITFRNQI (95 aa)) constitute a Fe2OG dioxygenase domain. Positions 201, 203, and 259 each coordinate Fe cation. R268 is a binding site for 2-oxoglutarate. The interval 559–588 (DSASDNDVETMKKSEKRRKRRKRNPPPVRQ) is disordered. Residues 572–582 (SEKRRKRRKRN) are compositionally biased toward basic residues. The Peptidase S30 domain occupies 589-745 (VITRAPVSNI…DCLADDYLQY (157 aa)). Active-site for P1 proteinase activity residues include H640, D651, and S692. Residues 948-1070 (VHVPLEGLCF…RNGCQEYRVG (123 aa)) form the Peptidase C6 domain. Residues C956 and H1029 each act as for helper component proteinase activity in the active site. One can recognise a Helicase ATP-binding domain in the interval 1540 to 1692 (TLTSSVKREF…TMHPVEVVNM (153 aa)). Residue 1553 to 1560 (GFVGSGKS) participates in ATP binding. A DEAH box motif is present at residues 1642–1645 (DESH). In terms of domain architecture, Helicase C-terminal spans 1696 to 1869 (SFEDFAIGQR…NVPPIFDNVD (174 aa)). Residue Y2238 is modified to O-(5'-phospho-RNA)-tyrosine. Residues 2354–2570 (GRSTIKSGNN…LDVGSNNAIR (217 aa)) form the Peptidase C4 domain. Active-site for nuclear inclusion protein A activity residues include H2400, D2435, and C2504. In terms of domain architecture, RdRp catalytic spans 2850 to 2974 (FVYGTGDGSQ…AIHPDRESIL (125 aa)). 2 disordered regions span residues 3200–3279 (MPQA…RKGL) and 3471–3491 (RHTTEDATARTHNLRGAAMMA). Residues 3236-3248 (RLSPERIVRHDDD) are compositionally biased toward basic and acidic residues. T3473 carries the phosphothreonine modification.

This sequence belongs to the potyviridae genome polyprotein family. The cofactor is Fe(2+). VPg is uridylylated by the polymerase and is covalently attached to the 5'-end of the genomic RNA. This uridylylated form acts as a nucleotide-peptide primer for the polymerase. In terms of processing, genome polyprotein of potyviruses undergoes post-translational proteolytic processing by the main proteinase NIa-pro resulting in the production of at least ten individual proteins. The P1 proteinase and the HC-pro cleave only their respective C-termini autocatalytically. 6K1 is essential for proper proteolytic separation of P3 from CI.

Its subcellular location is the host cytoplasmic vesicle. The protein resides in the virion. It carries out the reaction RNA(n) + a ribonucleoside 5'-triphosphate = RNA(n+1) + diphosphate. The enzyme catalyses Hydrolyzes glutaminyl bonds, and activity is further restricted by preferences for the amino acids in P6 - P1' that vary with the species of potyvirus, e.g. Glu-Xaa-Xaa-Tyr-Xaa-Gln-|-(Ser or Gly) for the enzyme from tobacco etch virus. The natural substrate is the viral polyprotein, but other proteins and oligopeptides containing the appropriate consensus sequence are also cleaved.. It catalyses the reaction Hydrolyzes a Gly-|-Gly bond at its own C-terminus, commonly in the sequence -Tyr-Xaa-Val-Gly-|-Gly, in the processing of the potyviral polyprotein.. In terms of biological role, required for aphid transmission and also has proteolytic activity. Only cleaves a Gly-Gly dipeptide at its own C-terminus. Interacts with virions and aphid stylets. Acts as a suppressor of RNA-mediated gene silencing, also known as post-transcriptional gene silencing (PTGS), a mechanism of plant viral defense that limits the accumulation of viral RNAs. May have RNA-binding activity. Functionally, has helicase activity. It may be involved in replication. Indispensable for virus replication. Reduces the abundance of host transcripts related to jasmonic acid biosynthesis therefore altering the host defenses. In order to increase its own stability, decreases host protein degradation pathways. Its function is as follows. Indispensable for virus replication. In terms of biological role, mediates the cap-independent, EIF4E-dependent translation of viral genomic RNAs. Binds to the cap-binding site of host EIF4E and thus interferes with the host EIF4E-dependent mRNA export and translation. VPg-RNA directly binds EIF4E and is a template for transcription. Also forms trimeric complexes with EIF4E-EIF4G, which are templates for translation. Functionally, has RNA-binding and proteolytic activities. An RNA-dependent RNA polymerase that plays an essential role in the virus replication. Its function is as follows. Involved in aphid transmission, cell-to-cell and systemis movement, encapsidation of the viral RNA and in the regulation of viral RNA amplification. This Blackberry virus Y (isolate Blackberry plant/USA:Arkansas/C3ARK/2005) (BVY) protein is Genome polyprotein.